The primary structure comprises 464 residues: UDP-N-acetylmuramoylalanine--D-glutamate ligase (464 aa).

Position 127–133 (127–133 (GSNGKST)) interacts with ATP.

The protein belongs to the MurCDEF family.

Its subcellular location is the cytoplasm. The enzyme catalyses UDP-N-acetyl-alpha-D-muramoyl-L-alanine + D-glutamate + ATP = UDP-N-acetyl-alpha-D-muramoyl-L-alanyl-D-glutamate + ADP + phosphate + H(+). The protein operates within cell wall biogenesis; peptidoglycan biosynthesis. Cell wall formation. Catalyzes the addition of glutamate to the nucleotide precursor UDP-N-acetylmuramoyl-L-alanine (UMA). In Dinoroseobacter shibae (strain DSM 16493 / NCIMB 14021 / DFL 12), this protein is UDP-N-acetylmuramoylalanine--D-glutamate ligase.